We begin with the raw amino-acid sequence, 398 residues long: Immunoglobulin heavy constant gamma 2A (398 aa).

3 Ig-like domains span residues Pro5 to Glu97, Pro120 to Ser219, and Pro228 to Ser324. 3 disulfides stabilise this stretch: Cys26/Cys81, Cys143/Cys203, and Cys249/Cys307. N-linked (GlcNAc...) asparagine glycosylation is present at Asn179. The chain crosses the membrane as a helical span at residues Gly345–Cys362. At Tyr363–Ala398 the chain is on the cytoplasmic side.

It localises to the cell membrane. This is Immunoglobulin heavy constant gamma 2A from Mus musculus (Mouse).